Here is a 336-residue protein sequence, read N- to C-terminus: uncharacterized protein (336 aa).

Residues 162–195 (ARGLPVHSSFKQNNSSQTSSNKGTTTVAAGSGSD) form a disordered region. The span at 169–187 (SSFKQNNSSQTSSNKGTTT) shows a compositional bias: low complexity.

Belongs to the AHA1 family.

This is an uncharacterized protein from Schizosaccharomyces pombe (strain 972 / ATCC 24843) (Fission yeast).